The chain runs to 913 residues: Calcium-activated chloride channel regulator 1 (913 aa).

The N-terminal stretch at 1 to 21 is a signal peptide; sequence MGSFKSSVFILVLHLLEGALS. The interval 46–199 is metalloprotease domain; the sequence is DETLIQQIKD…DIAGKNVVNH (154 aa). Residue His-156 participates in Zn(2+) binding. Glu-157 is a catalytic residue. Residues His-160 and Asn-167 each coordinate Zn(2+). One can recognise a VWFA domain in the interval 306–475; the sequence is IVCLVLDKSG…NGLIDAFGAL (170 aa). Asn-503, Asn-514, Asn-770, Asn-804, Asn-810, Asn-836, and Asn-885 each carry an N-linked (GlcNAc...) asparagine glycan.

It belongs to the CLCR family. Post-translationally, glycosylated. In terms of processing, the translation product is autoproteolytically cleaved by the metalloprotease domain in the endoplasmic reticulum into a N-terminal and a C-terminal products that remain physically associated with each other. The cleavage is necessary for calcium-activated chloride channel (CaCC) activation activity. In terms of tissue distribution, expressed in mucin-producing cells in the respiratory and intestinal tracts, cutaneous sweat glands, and renal mucous glands (at protein level). Strong overexpression in the airways of horses with recurrent airway obstruction (at protein level).

Its subcellular location is the secreted. It localises to the extracellular space. Functionally, may be involved in mediating calcium-activated chloride conductance. May play critical roles in goblet cell metaplasia, mucus hypersecretion, cystic fibrosis and AHR. May be involved in the regulation of mucus production and/or secretion by goblet cells. Involved in the regulation of tissue inflammation in the innate immune response. May play a role as a tumor suppressor. Induces MUC5AC. The protein is Calcium-activated chloride channel regulator 1 (CLCA1) of Equus caballus (Horse).